A 237-amino-acid polypeptide reads, in one-letter code: MGRAFEYRRAAKEKRWDKMSKLFPKLGKLITIAAKEGGADPEMNAKLRTAITNAKAQNMPKDNIDAAIKRALGKDGVVITEVNYEAKGPHGVLLFIECATDNPTRTVANVKSYINKIGGQLLQNGSLEFMFSHKAVFEFPKSHLHMDREELELVLIDAGLEELDEQEETLYVYGDYTQFGSLSSTLEELKIDVTKASLQRIANTPVEFSEEQLADIEKLIDRIEDDDDVQAVFTNIA.

Belongs to the TACO1 family.

Its subcellular location is the cytoplasm. The sequence is that of Probable transcriptional regulatory protein WS1016 from Wolinella succinogenes (strain ATCC 29543 / DSM 1740 / CCUG 13145 / JCM 31913 / LMG 7466 / NCTC 11488 / FDC 602W) (Vibrio succinogenes).